The chain runs to 96 residues: Large ribosomal subunit protein uL15 (96 aa).

It belongs to the universal ribosomal protein uL15 family. In terms of assembly, part of the 50S ribosomal subunit.

Its function is as follows. Binds to the 23S rRNA. This Streptomyces scabiei protein is Large ribosomal subunit protein uL15 (rplO).